A 382-amino-acid polypeptide reads, in one-letter code: uncharacterized protein (382 aa).

A run of 12 helical transmembrane segments spans residues 14–34, 45–65, 75–95, 102–122, 131–151, 157–177, 204–224, 235–255, 265–284, 289–311, 325–345, and 349–369; these read GLLL…LWLA, MVSS…GYLI, YLAS…VGFW, FIAG…LMCS, LLAA…LLVS, LLHV…PLLF, LGVN…GLMP, ASIG…QWPV, LLVL…VMLT, APAL…AWAC, ALLL…AMLM, and SDNL…LMLL.

The protein belongs to the major facilitator superfamily. YcaD (TC 2.A.1.26) family.

It is found in the cell inner membrane. This is an uncharacterized protein from Salmonella arizonae (strain ATCC BAA-731 / CDC346-86 / RSK2980).